The following is a 331-amino-acid chain: Ketol-acid reductoisomerase (NADP(+)) (331 aa).

Residues 2–182 (AQLFYDSDAD…GGTRAGILET (181 aa)) enclose the KARI N-terminal Rossmann domain. NADP(+)-binding positions include 25–28 (YGSQ), S51, S53, and 83–86 (DEFQ). The active site involves H108. G134 is a binding site for NADP(+). Residues 183 to 328 (NFKEETETDL…KGLRSMFSWL (146 aa)) form the KARI C-terminal knotted domain. Mg(2+) is bound by residues D191, E195, E227, and E231. Substrate is bound at residue S252.

The protein belongs to the ketol-acid reductoisomerase family. The cofactor is Mg(2+).

The enzyme catalyses (2R)-2,3-dihydroxy-3-methylbutanoate + NADP(+) = (2S)-2-acetolactate + NADPH + H(+). It carries out the reaction (2R,3R)-2,3-dihydroxy-3-methylpentanoate + NADP(+) = (S)-2-ethyl-2-hydroxy-3-oxobutanoate + NADPH + H(+). It participates in amino-acid biosynthesis; L-isoleucine biosynthesis; L-isoleucine from 2-oxobutanoate: step 2/4. The protein operates within amino-acid biosynthesis; L-valine biosynthesis; L-valine from pyruvate: step 2/4. Involved in the biosynthesis of branched-chain amino acids (BCAA). Catalyzes an alkyl-migration followed by a ketol-acid reduction of (S)-2-acetolactate (S2AL) to yield (R)-2,3-dihydroxy-isovalerate. In the isomerase reaction, S2AL is rearranged via a Mg-dependent methyl migration to produce 3-hydroxy-3-methyl-2-ketobutyrate (HMKB). In the reductase reaction, this 2-ketoacid undergoes a metal-dependent reduction by NADPH to yield (R)-2,3-dihydroxy-isovalerate. In Synechococcus sp. (strain CC9605), this protein is Ketol-acid reductoisomerase (NADP(+)).